Consider the following 151-residue polypeptide: MKLLLSFALLGLVACQEKCDSQNKYCFPNEVATWTGAVEYCLKNGWKLAVVNSEAKQMKIEGLAKNLPEFKNGKVELWIGASDQTKEGHFVWIANGQPIEYANWLPGKPDNKDGKEHCVHLWYEKAKKLNWGWNDVVCTSKRRFVCERKKK.

Residues 1-15 (MKLLLSFALLGLVAC) form the signal peptide. The C-type lectin domain occupies 25–147 (YCFPNEVATW…CTSKRRFVCE (123 aa)). 2 disulfides stabilise this stretch: cysteine 41–cysteine 146 and cysteine 118–cysteine 138.

It depends on Ca(2+) as a cofactor. As to expression, expressed in female salivary gland. Not detected or low-level expression in female midgut and fat body.

It localises to the secreted. Salivary protein with carbohydrate-binding activity. Binds to D-mannose, D-galactose, D-glucose and maltose. Agglutinates host erythrocytes. Probably participates in mosquito innate immune responses to prevent microorganism multiplication in sugar and blood meals. Functionally, (Microbial infection) Binds to the surface of and agglutinates Escherichia coli in vitro. In terms of biological role, (Microbial infection) Binds to the surface of and agglutinates Pseudomonas aeruginosa in vitro. Its function is as follows. (Microbial infection) Binds to the surface of and agglutinates Bacillus subtilis in vitro. (Microbial infection) Agglutinates Staphylococcus aureus in vitro. Functionally, (Microbial infection) Agglutinates Candida albicans in vitro. In terms of biological role, (Microbial infection) Does not affect replication of dengue virus type 2 in host cells. The sequence is that of Salivary C-type lectin 2 from Aedes albopictus (Asian tiger mosquito).